Consider the following 258-residue polypeptide: Peroxisomal membrane protein 11B (258 aa).

Lysine 43 bears the N6-acetyllysine mark. Residues 210–258 form an interaction with PEX19, PEX11G and FIS1 and peroxisome targeting region; sequence VVRNACDLFIPLDKLGLWRCGPGIVGLCGLVSSILSILTLICPWLRLKP. Residues 232–254 form a helical membrane-spanning segment; sequence GIVGLCGLVSSILSILTLICPWL.

The protein belongs to the peroxin-11 family. In terms of assembly, homodimer. Heterodimer with PEX11G. Interacts with PEX19. Interacts with FIS1.

The protein resides in the peroxisome membrane. Involved in peroxisomal proliferation. May regulate peroxisome division by recruiting the dynamin-related GTPase DNM1L to the peroxisomal membrane. Promotes membrane protrusion and elongation on the peroxisomal surface. This chain is Peroxisomal membrane protein 11B (PEX11B), found in Bos taurus (Bovine).